We begin with the raw amino-acid sequence, 361 residues long: Phospho-N-acetylmuramoyl-pentapeptide-transferase (361 aa).

10 consecutive transmembrane segments (helical) span residues 28-48, 74-94, 99-119, 133-153, 168-188, 203-223, 236-256, 263-283, 288-308, and 338-358; these read LAIIITLSLSFITGPILIEFL, TMGGIMIILSSCLSTLLLADL, IWITLFGFISFGIIGFMDDYA, SKLLLQGIISFIICVLLEYLD, LSLDLGYCYIVFAIFVIVGSS, VPIAFTAGSFALISYLVGNLI, TGELTVLCAGLVGSCLGFLWF, VFMGDTGSLSLGGVLGIISVI, IVLAIVGGLFVIETASVILQV, and KVVIRFWIISVIFALIGLSSL.

Belongs to the glycosyltransferase 4 family. MraY subfamily. It depends on Mg(2+) as a cofactor.

The protein localises to the cell inner membrane. The enzyme catalyses UDP-N-acetyl-alpha-D-muramoyl-L-alanyl-gamma-D-glutamyl-meso-2,6-diaminopimeloyl-D-alanyl-D-alanine + di-trans,octa-cis-undecaprenyl phosphate = di-trans,octa-cis-undecaprenyl diphospho-N-acetyl-alpha-D-muramoyl-L-alanyl-D-glutamyl-meso-2,6-diaminopimeloyl-D-alanyl-D-alanine + UMP. The protein operates within cell wall biogenesis; peptidoglycan biosynthesis. Catalyzes the initial step of the lipid cycle reactions in the biosynthesis of the cell wall peptidoglycan: transfers peptidoglycan precursor phospho-MurNAc-pentapeptide from UDP-MurNAc-pentapeptide onto the lipid carrier undecaprenyl phosphate, yielding undecaprenyl-pyrophosphoryl-MurNAc-pentapeptide, known as lipid I. This chain is Phospho-N-acetylmuramoyl-pentapeptide-transferase, found in Rickettsia africae (strain ESF-5).